A 903-amino-acid polypeptide reads, in one-letter code: Disintegrin and metalloproteinase domain-containing protein 12 (903 aa).

Positions methionine 1–glycine 31 are cleaved as a signal peptide. A propeptide spanning residues methionine 32–arginine 205 is cleaved from the precursor. N-linked (GlcNAc...) asparagine glycosylation is found at asparagine 112, asparagine 147, and asparagine 157. The short motif at glycine 175–asparagine 182 is the Cysteine switch element. Zn(2+) is bound at residue cysteine 177. Residues asparagine 182 and asparagine 185 are each glycosylated (N-linked (GlcNAc...) asparagine). Over glutamate 206–glycine 706 the chain is Extracellular. Positions lysine 212–proline 414 constitute a Peptidase M12B domain. Intrachain disulfides connect cysteine 323–cysteine 409, cysteine 365–cysteine 393, and cysteine 367–cysteine 376. Position 348 (histidine 348) interacts with Zn(2+). Residue glutamate 349 is part of the active site. Residues histidine 352 and histidine 358 each contribute to the Zn(2+) site. The Disintegrin domain maps to glycine 422–aspartate 508. Asparagine 450 carries N-linked (GlcNAc...) asparagine glycosylation. A disulfide bridge connects residues cysteine 480 and cysteine 500. Residue asparagine 649 is glycosylated (N-linked (GlcNAc...) asparagine). Residues glycine 654–aspartate 686 form the EGF-like domain. Disulfide bonds link cysteine 658–cysteine 668, cysteine 662–cysteine 674, and cysteine 676–cysteine 685. The chain crosses the membrane as a helical span at residues leucine 707–leucine 727. The Cytoplasmic segment spans residues lysine 728–lysine 903. 2 disordered regions span residues serine 753–lysine 790 and histidine 819–lysine 903. 2 consecutive short sequence motifs (SH3-binding; class II) follow at residues alanine 824–arginine 830 and lysine 846–lysine 852. 3 short sequence motifs (SH3-binding; class I) span residues arginine 830 to alanine 837, lysine 852 to proline 858, and arginine 881 to proline 887. Pro residues predominate over residues proline 847 to alanine 856. Position 901 is a phosphotyrosine; by SRC (tyrosine 901).

In terms of assembly, interacts with alpha-actinin-2 and with syndecans. Interacts with SH3PXD2A. Interacts with FST3. Interacts with RACK1; the interaction is required for PKC-dependent translocation of ADAM12 to the cell membrane. Zn(2+) serves as cofactor. In terms of processing, the precursor is cleaved by a furin endopeptidase. In terms of tissue distribution, expressed during early developing mesenchymal cells that give rise to skeletal muscle, bones and visceral organs. Not expressed in adult normal muscle but expressed in regenerating muscle.

The protein localises to the membrane. Functionally, involved in skeletal muscle regeneration, specifically at the onset of cell fusion. Also involved in macrophage-derived giant cells (MGC) and osteoclast formation from mononuclear precursors. This Mus musculus (Mouse) protein is Disintegrin and metalloproteinase domain-containing protein 12 (Adam12).